The following is a 368-amino-acid chain: Histidinol-phosphate aminotransferase (368 aa).

An N6-(pyridoxal phosphate)lysine modification is found at Lys215.

The protein belongs to the class-II pyridoxal-phosphate-dependent aminotransferase family. Histidinol-phosphate aminotransferase subfamily. In terms of assembly, homodimer. Pyridoxal 5'-phosphate is required as a cofactor.

It catalyses the reaction L-histidinol phosphate + 2-oxoglutarate = 3-(imidazol-4-yl)-2-oxopropyl phosphate + L-glutamate. The protein operates within amino-acid biosynthesis; L-histidine biosynthesis; L-histidine from 5-phospho-alpha-D-ribose 1-diphosphate: step 7/9. In Buchnera aphidicola subsp. Acyrthosiphon pisum (strain APS) (Acyrthosiphon pisum symbiotic bacterium), this protein is Histidinol-phosphate aminotransferase (hisC).